Reading from the N-terminus, the 192-residue chain is dTDP-3-amino-3,6-dideoxy-alpha-D-galactopyranose 3-N-acetyltransferase (192 aa).

This sequence belongs to the transferase hexapeptide repeat family.

It catalyses the reaction dTDP-3-amino-3,6-dideoxy-alpha-D-galactopyranose + acetyl-CoA = dTDP-3-acetamido-3,6-dideoxy-alpha-D-galactopyranose + CoA + H(+). In terms of biological role, catalyzes the transfer of an acetyl group to dTDP-D-Fucp3N to form dTDP-D-Fucp3NAc in the biosynthesis of dTDP-3-acetamido-3,6-dideoxy-alpha-D-galactose, a glycan chain of the S-layer. The chain is dTDP-3-amino-3,6-dideoxy-alpha-D-galactopyranose 3-N-acetyltransferase (fdtC) from Aneurinibacillus thermoaerophilus.